A 179-amino-acid chain; its full sequence is uncharacterized protein (179 aa).

This is an uncharacterized protein from Encephalitozoon cuniculi (strain GB-M1) (Microsporidian parasite).